Reading from the N-terminus, the 62-residue chain is Sperm protamine P1 (62 aa).

The interval 1 to 62 is disordered; the sequence is MARSRRHSRS…RCSRRRRRRC (62 aa).

Belongs to the protamine P1 family. Testis.

The protein localises to the nucleus. It localises to the chromosome. Protamines substitute for histones in the chromatin of sperm during the haploid phase of spermatogenesis. They compact sperm DNA into a highly condensed, stable and inactive complex. The sequence is that of Sperm protamine P1 (PRM1) from Planigale ingrami (Long-tailed planigale).